We begin with the raw amino-acid sequence, 262 residues long: MSNKPKRILVSNDDGYFSEGLQALVEAVSPLGEVWVVAPDREQSAASHAISLHRPLRIKEVRERWFAVDGTPADCAYLAINHLLKDDRPVLMVSGINHGANLAEDIMYSGTVAAAMEGALLGVPAIAFSLVARRNFDFAPGARFARSLVSSALSRPLPPRMLLNVNIPGGVEPEGYVVTRQGRHSYGFEVVENEDPRGRKYYWIGGSDYQHEDIPGSDCNAVFRDKRVSVTPLHFELTDHGRLPDLSGWQVDGFNRHEPDGA.

Asp13, Asp14, Ser44, and Asn97 together coordinate a divalent metal cation.

This sequence belongs to the SurE nucleotidase family. The cofactor is a divalent metal cation.

The protein localises to the cytoplasm. It catalyses the reaction a ribonucleoside 5'-phosphate + H2O = a ribonucleoside + phosphate. Nucleotidase that shows phosphatase activity on nucleoside 5'-monophosphates. The polypeptide is 5'-nucleotidase SurE (Myxococcus xanthus (strain DK1622)).